The primary structure comprises 101 residues: Signal recognition particle 19 kDa protein (101 aa).

This sequence belongs to the SRP19 family. As to quaternary structure, part of the signal recognition particle protein translocation system, which is composed of SRP and FtsY. Archaeal SRP consists of a 7S RNA molecule of 300 nucleotides and two protein subunits: SRP54 and SRP19.

The protein resides in the cytoplasm. Involved in targeting and insertion of nascent membrane proteins into the cytoplasmic membrane. Binds directly to 7S RNA and mediates binding of the 54 kDa subunit of the SRP. In Methanosarcina barkeri (strain Fusaro / DSM 804), this protein is Signal recognition particle 19 kDa protein.